Consider the following 245-residue polypeptide: TLC domain-containing protein 5 (245 aa).

6 helical membrane passes run 1 to 21 (MAVGLCVQVLCSLGGWLSLYT), 38 to 58 (LVTFTHGVLSIGLSAYIGFID), 75 to 95 (VHVLCLTLGYFIFDLGWCIYF), 99 to 119 (GPLMLAHHTLSILGIIMALAL), 162 to 182 (FLFVALFTGVRIGVGAHLLFC), and 191 to 211 (WFVKVGGVAMYAVSWCFMVSI). The 176-residue stretch at 29–204 (HRSCEWSCRL…VGGVAMYAVS (176 aa)) folds into the TLC domain.

It belongs to the TLCD5 family.

Its subcellular location is the membrane. This Mus musculus (Mouse) protein is TLC domain-containing protein 5 (Tlcd5).